A 447-amino-acid polypeptide reads, in one-letter code: MVGWLIYRLHLDPLSRIPGPLLAKFVPICNIRMVLTGRMMFTFKELHDTYGPVVRIGPSELSFATHSAFDTIYGPYGDKNFSLYGSRKGLLGSLDKENRRKLRPLVATSLNELLAAKGEEYCHLAMDEQLASHHVGQTEATPVSLSTLNNRYLWQFASMAANGNCGDETDRGTSFTNIFMGLSFMALTQVIAICFIFRQPVHPGEVNYDRDESPFPDNLHSRLQQAASRTSLHVPEYLLQINCFVLRFSIYGTADNMLNALFYFLLRNPQCLKRLEEEVSCVGATVNELSDDRLAKLPYLNACINETFRIAPAFNGGILQRVSCGATVDGVYVPPGVAVSVDHYTLGHDPQYWVKPDVFNPERWIDPDCKDNFKASRPFLIGARQCPGRQMAYQMFRVCVAKLVYLYTFELLNKDFDIERDTFSSYHWTGVKLDVTMKPRTPGVLGY.

Cysteine 386 contacts heme.

The protein belongs to the cytochrome P450 family. Requires heme as cofactor.

It catalyses the reaction 2 fonsecin B + NADPH + O2 + H(+) = aurasperone B + NADP(+) + 2 H2O. It carries out the reaction 2 rubrofusarin B + NADPH + O2 + H(+) = aurasperone A + NADP(+) + 2 H2O. It participates in secondary metabolite biosynthesis. In terms of biological role, cytochrome P450 monooxygenase; part of the gene cluster that mediates the biosynthesis of aurasperone B, a dimeric gamma-naphthopyrone. The first step in the biosynthesis of aurasperone B is the production of gamma-naphthopyrone precursor YWA1 by the non-reducing polyketide synthase albA, via condensation of one acetyl-CoA starter unit with 6 malonyl-CoA units. YWA1 is then methylated by aunE at position C-6 to yield foncesin which is further methylated at position C-8 by aunD to produce fonsecin B. A key enzyme in the biosynthetic pathway is the cytochrome P450 monooxygenase aunB which catalyzes the oxidative dimerization of fonsecin B to aurasperone B. AunB also catalyzes the oxidative dimerization of rubrofusarin B into aurasperone A. The protein is Cytochrome P450 monooxygenase aunB of Aspergillus niger (strain ATCC MYA-4892 / CBS 513.88 / FGSC A1513).